Here is a 77-residue protein sequence, read N- to C-terminus: Large ribosomal subunit protein eL20 (77 aa).

This sequence belongs to the eukaryotic ribosomal protein eL20 family. In terms of assembly, part of the 50S ribosomal subunit. Binds 23S rRNA.

This is Large ribosomal subunit protein eL20 from Thermococcus onnurineus (strain NA1).